The chain runs to 307 residues: Cytochrome f (307 aa).

A signal peptide spans 1-24; sequence MKKNLFLVSVFASLFVGTANNALA. Residues Tyr25, Cys45, Cys48, and His49 each coordinate heme. A helical membrane pass occupies residues 273–293; the sequence is LQGLVIFLGFVLIAQVFLVLK.

Belongs to the cytochrome f family. In terms of assembly, the 4 large subunits of the cytochrome b6-f complex are cytochrome b6, subunit IV (17 kDa polypeptide, petD), cytochrome f and the Rieske protein, while the 4 small subunits are PetG, PetL, PetM and PetN. The complex functions as a dimer. Heme is required as a cofactor.

The protein localises to the plastid. It localises to the chloroplast thylakoid membrane. Functionally, component of the cytochrome b6-f complex, which mediates electron transfer between photosystem II (PSII) and photosystem I (PSI), cyclic electron flow around PSI, and state transitions. This chain is Cytochrome f, found in Ostreococcus tauri.